A 398-amino-acid chain; its full sequence is O-methyltransferase mpaG' (398 aa).

Serine 144 is a binding site for (4E,8E)-10-(4,6-dihydroxy-7-methyl-3-oxo-1,3-dihydro-2-benzofuran-5-yl)-4,8-dimethyldeca-4,8-dienoate. Residue serine 144 participates in 4-farnesyl-3,5-dihydroxy-6-methylphthalide binding. 6-O-desmethylmycophenolate is bound at residue serine 144. Asparagine 197 is an S-adenosyl-L-homocysteine binding site. Tyrosine 199 contacts (4E,8E)-10-(4,6-dihydroxy-7-methyl-3-oxo-1,3-dihydro-2-benzofuran-5-yl)-4,8-dimethyldeca-4,8-dienoate. Tyrosine 199 is a binding site for 4-farnesyl-3,5-dihydroxy-6-methylphthalide. Tyrosine 199 is a binding site for 6-O-desmethylmycophenolate. The S-adenosyl-L-homocysteine site is built by tyrosine 203, aspartate 237, glycine 239, histidine 244, aspartate 245, aspartate 264, and arginine 265. Aspartate 264 lines the S-adenosyl-L-methionine pocket. The (4E,8E)-10-(4,6-dihydroxy-7-methyl-3-oxo-1,3-dihydro-2-benzofuran-5-yl)-4,8-dimethyldeca-4,8-dienoate site is built by arginine 265 and glutamine 267. Arginine 265 contributes to the 6-O-desmethylmycophenolate binding site. The S-adenosyl-L-homocysteine site is built by aspartate 286, isoleucine 287, and histidine 302. Position 303 (serine 303) interacts with (4E,8E)-10-(4,6-dihydroxy-7-methyl-3-oxo-1,3-dihydro-2-benzofuran-5-yl)-4,8-dimethyldeca-4,8-dienoate. Serine 303 is a 4-farnesyl-3,5-dihydroxy-6-methylphthalide binding site. 6-O-desmethylmycophenolate is bound at residue serine 303. Histidine 306 functions as the Proton acceptor in the catalytic mechanism. Residues glutamate 335 and glutamate 362 contribute to the active site.

The protein belongs to the class I-like SAM-binding methyltransferase superfamily. Cation-independent O-methyltransferase family. Homodimer.

Its subcellular location is the cytoplasm. It is found in the cytosol. It catalyses the reaction (4E,8E)-10-(4,6-dihydroxy-7-methyl-3-oxo-1,3-dihydro-2-benzofuran-5-yl)-4,8-dimethyldeca-4,8-dienoate + S-adenosyl-L-methionine = (4E,8E)-10-(4-hydroxy-6-methoxy-7-methyl-3-oxo-1,3-dihydro-2-benzofuran-5-yl)-4,8-dimethyldeca-4,8-dienoate + S-adenosyl-L-homocysteine + H(+). The catalysed reaction is 4-farnesyl-3,5-dihydroxy-6-methylphthalide + S-adenosyl-L-methionine = 4-farnesyl-3,5-dihydroxy-6-methoxylphthalide + S-adenosyl-L-homocysteine + H(+). The enzyme catalyses 6-O-desmethylmycophenolate + S-adenosyl-L-methionine = mycophenolate + S-adenosyl-L-homocysteine + H(+). It participates in secondary metabolite biosynthesis; terpenoid biosynthesis. In terms of biological role, O-methyltransferase; part of the gene cluster that mediates the biosynthesis of mycophenolic acid (MPA), the first isolated antibiotic natural product in the world obtained from a culture of Penicillium brevicompactum in 1893. MpaG' catalyzes the 5-O-methylation of three precursors in MPA biosynthesis including demethylmycophenolic acid (DMMPA), 4-farnesyl-3,5-dihydroxy-6-methylphthalide (FDHMP), and an intermediate containing three fewer carbon atoms compared to FDHMP (FDHMP-3C) with different catalytic efficiencies. The first step of the pathway is the synthesis of 5-methylorsellinic acid (5MOA) by the cytosolic polyketide synthase mpaC. 5MOA is then converted to the phthalide compound 5,7-dihydroxy-4,6-dimethylphthalide (DHMP) by the endoplasmic reticulum-bound cytochrome P450 monooxygenase mpaDE. MpaDE first catalyzes hydroxylation of 5-MOA to 4,6-dihydroxy-2-(hydroxymethyl)-3-methylbenzoic acid (DHMB). MpaDE then acts as a lactone synthase that catalyzes the ring closure to convert DHMB into DHMP. The next step is the prenylation of DHMP by the Golgi apparatus-associated prenyltransferase mpaA to yield farnesyl-DHMP (FDHMP). The ER-bound oxygenase mpaB then mediates the oxidative cleavage the C19-C20 double bond in FDHMP to yield FDHMP-3C via a mycophenolic aldehyde intermediate. The O-methyltransferase mpaG catalyzes the methylation of FDHMP-3C to yield MFDHMP-3C. MpaG and mpaB can also switch the order in which they act and, in this case, the conversion of FDHMP to MFDHMP-3C can take place via 5-O-methyl-FDHMP (MFDHMP). After the cytosolic methylation of FDHMP-3C, MFDHMP-3C enters into peroxisomes probably via free diffusion due to its low molecular weight. Upon a peroxisomal CoA ligation reaction, catalyzed by a beta-oxidation component enzyme acyl-CoA ligase ACL891, MFDHMP-3C-CoA would then be restricted to peroxisomes for the following beta-oxidation pathway steps. The peroxisomal beta-oxidation machinery than converts MFDHMP-3C-CoA into MPA_CoA, via a beta-oxidation chain-shortening process. Finally mpaH acts as a peroxisomal acyl-CoA hydrolase with high substrate specificity toward MPA-CoA to release the final product MPA. MpaH can also hydrolyze DMMPA-CoA to release demethylmycophenolic acid (DMMPA) that is further converted to MPA by mpaG. This is O-methyltransferase mpaG' from Penicillium brevicompactum.